Reading from the N-terminus, the 205-residue chain is Enhancer of split mgamma protein (205 aa).

Positions 15-72 constitute a bHLH domain; it reads YRKVMKPMLERKRRARINKCLDELKDLMVATLESEGEHVTRLEKADILELTVTHLQKM. Residues 93 to 126 form the Orange domain; the sequence is FRSGYIHAVNEVSRSLSQLPGMNVSLGTQLMTHL. Residues 202–205 carry the WRPW motif motif; sequence WRPW.

Homodimer. Heterodimer with dpn. Might form higher-order oligomers. Transcription repression requires formation of a complex with a corepressor protein (Groucho). In terms of tissue distribution, expressed in sensory organ precursors in the wing, leg and eye imaginal disk.

The protein localises to the nucleus. In terms of biological role, transcriptional repressor of genes that require a bHLH protein for their transcription. May serve as a transcriptional regulator of the Achaete-scute complex (AS-C) genes. Contributes to the neural-epidermal lineage decision during early neurogenesis. Part of the Notch signaling pathway, plays a role in neuroblasts proliferation in embryos and larvae. In the larval brain, together with other self-renewal transcriptional repressors such as klu and dpn, required for type II neuroblast self-renewal and for maintaining erm in an inactive state in intermediate neural progenitors (INP) derived from type II neuroblasts. The protein is Enhancer of split mgamma protein of Drosophila melanogaster (Fruit fly).